The chain runs to 306 residues: tRNA dimethylallyltransferase (306 aa).

Residue 12-19 (GPTAAGKT) coordinates ATP. 14–19 (TAAGKT) is a substrate binding site. Interaction with substrate tRNA regions lie at residues 37–40 (DSAL), 161–165 (QRINR), and 242–247 (RCVGYR).

The protein belongs to the IPP transferase family. In terms of assembly, monomer. Requires Mg(2+) as cofactor.

It carries out the reaction adenosine(37) in tRNA + dimethylallyl diphosphate = N(6)-dimethylallyladenosine(37) in tRNA + diphosphate. In terms of biological role, catalyzes the transfer of a dimethylallyl group onto the adenine at position 37 in tRNAs that read codons beginning with uridine, leading to the formation of N6-(dimethylallyl)adenosine (i(6)A). This Pseudoalteromonas translucida (strain TAC 125) protein is tRNA dimethylallyltransferase.